Reading from the N-terminus, the 97-residue chain is Aspartyl/glutamyl-tRNA(Asn/Gln) amidotransferase subunit C (97 aa).

Belongs to the GatC family. Heterotrimer of A, B and C subunits.

The enzyme catalyses L-glutamyl-tRNA(Gln) + L-glutamine + ATP + H2O = L-glutaminyl-tRNA(Gln) + L-glutamate + ADP + phosphate + H(+). The catalysed reaction is L-aspartyl-tRNA(Asn) + L-glutamine + ATP + H2O = L-asparaginyl-tRNA(Asn) + L-glutamate + ADP + phosphate + 2 H(+). Allows the formation of correctly charged Asn-tRNA(Asn) or Gln-tRNA(Gln) through the transamidation of misacylated Asp-tRNA(Asn) or Glu-tRNA(Gln) in organisms which lack either or both of asparaginyl-tRNA or glutaminyl-tRNA synthetases. The reaction takes place in the presence of glutamine and ATP through an activated phospho-Asp-tRNA(Asn) or phospho-Glu-tRNA(Gln). This is Aspartyl/glutamyl-tRNA(Asn/Gln) amidotransferase subunit C from Synechococcus sp. (strain JA-2-3B'a(2-13)) (Cyanobacteria bacterium Yellowstone B-Prime).